The following is a 252-amino-acid chain: Hydroxyacylglutathione hydrolase (252 aa).

His54, His56, Asp58, His59, His111, Asp128, and His166 together coordinate Zn(2+).

This sequence belongs to the metallo-beta-lactamase superfamily. Glyoxalase II family. Monomer. Requires Zn(2+) as cofactor.

It carries out the reaction an S-(2-hydroxyacyl)glutathione + H2O = a 2-hydroxy carboxylate + glutathione + H(+). The protein operates within secondary metabolite metabolism; methylglyoxal degradation; (R)-lactate from methylglyoxal: step 2/2. Thiolesterase that catalyzes the hydrolysis of S-D-lactoyl-glutathione to form glutathione and D-lactic acid. The chain is Hydroxyacylglutathione hydrolase from Vibrio campbellii (strain ATCC BAA-1116).